The primary structure comprises 187 residues: Orotate phosphoribosyltransferase (187 aa).

Residues arginine 99, lysine 100, lysine 103, histidine 105, and aspartate 125–serine 133 contribute to the 5-phospho-alpha-D-ribose 1-diphosphate site. Threonine 129 and arginine 157 together coordinate orotate.

This sequence belongs to the purine/pyrimidine phosphoribosyltransferase family. PyrE subfamily. As to quaternary structure, homodimer. It depends on Mg(2+) as a cofactor.

It catalyses the reaction orotidine 5'-phosphate + diphosphate = orotate + 5-phospho-alpha-D-ribose 1-diphosphate. The protein operates within pyrimidine metabolism; UMP biosynthesis via de novo pathway; UMP from orotate: step 1/2. Its function is as follows. Catalyzes the transfer of a ribosyl phosphate group from 5-phosphoribose 1-diphosphate to orotate, leading to the formation of orotidine monophosphate (OMP). This Leptospira borgpetersenii serovar Hardjo-bovis (strain JB197) protein is Orotate phosphoribosyltransferase.